The sequence spans 258 residues: C1q-related factor (258 aa).

Positions 1 to 16 (MLLVLVVLIPVLVSSG) are cleaved as a signal peptide. Positions 39 to 117 (GPGAGARTDG…PGLPGAGGSG (79 aa)) are disordered. Residues 67 to 77 (GPQGKPGRTGK) show a composition bias toward low complexity. One can recognise a Collagen-like domain in the interval 67 to 115 (GPQGKPGRTGKPGPPGPPGDPGPPGPVGPPGEKGEPGKPGPPGLPGAGG). The segment covering 78–95 (PGPPGPPGDPGPPGPVGP) has biased composition (pro residues). The 134-residue stretch at 125–258 (TTVPRVAFYA…TFSGFIIYSD (134 aa)) folds into the C1q domain.

In terms of assembly, interacts with ADGRB3. Forms heterooligomers with C1QL4, when proteins are coexpressed; this interaction does not occur after secretion. In terms of tissue distribution, expressed in brainstem.

The protein resides in the secreted. In terms of biological role, may regulate the number of excitatory synapses that are formed on hippocampus neurons. Has no effect on inhibitory synapses. This chain is C1q-related factor (C1QL1), found in Homo sapiens (Human).